The chain runs to 506 residues: Cobyric acid synthase (506 aa).

The GATase cobBQ-type domain maps to 254-453 (DLDIAVIRLP…IHGIFESDSF (200 aa)). The active-site Nucleophile is Cys334. His445 is an active-site residue.

It belongs to the CobB/CobQ family. CobQ subfamily.

The protein operates within cofactor biosynthesis; adenosylcobalamin biosynthesis. Functionally, catalyzes amidations at positions B, D, E, and G on adenosylcobyrinic A,C-diamide. NH(2) groups are provided by glutamine, and one molecule of ATP is hydrogenolyzed for each amidation. The chain is Cobyric acid synthase from Dehalococcoides mccartyi (strain ATCC BAA-2266 / KCTC 15142 / 195) (Dehalococcoides ethenogenes (strain 195)).